We begin with the raw amino-acid sequence, 325 residues long: Probable NADH kinase (325 aa).

Belongs to the NAD kinase family. In terms of assembly, homodimer.

The protein resides in the cytoplasm. It carries out the reaction NADH + ATP = ADP + NADPH + H(+). Key source of the cellular reductant NADPH which is an important antioxidant factor. The protein is Probable NADH kinase of Oryza sativa subsp. japonica (Rice).